Here is a 549-residue protein sequence, read N- to C-terminus: Cytochrome bc1 complex cytochrome b subunit (549 aa).

A helical membrane pass occupies residues 45–65 (FLLGEIALYSFVVLLITGVYL). Residues H114 and H128 each coordinate heme. 3 consecutive transmembrane segments (helical) span residues 118-138 (ALMF…TGAF), 146-166 (WVIG…GYSL), and 189-209 (VIGT…TILI). H216 and H231 together coordinate heme. 5 helical membrane-spanning segments follow: residues 217 to 237 (ILLL…LVWF), 266 to 286 (SGAF…LLQI), 335 to 355 (PVWV…YPFL), 381 to 401 (IGAM…NDII), and 418 to 438 (IGMV…CIGL).

It belongs to the cytochrome b family. The cytochrome bc1 complex is composed of a cytochrome b (QcrB), the Rieske iron-sulfur protein (QcrA) and a diheme cytochrome c (QcrC) subunit. Heme serves as cofactor.

It localises to the cell membrane. The catalysed reaction is a quinol + 2 Fe(III)-[cytochrome c](out) = a quinone + 2 Fe(II)-[cytochrome c](out) + 2 H(+)(out). In terms of biological role, cytochrome b subunit of the cytochrome bc1 complex, an essential component of the respiratory electron transport chain required for ATP synthesis. The bc1 complex catalyzes the oxidation of ubiquinol and the reduction of cytochrome c in the respiratory chain. The bc1 complex operates through a Q-cycle mechanism that couples electron transfer to generation of the proton gradient that drives ATP synthesis. The cytochrome b subunit contains two ubiquinol reactive sites: the oxidation (QP) site and the reduction (QN) site. The chain is Cytochrome bc1 complex cytochrome b subunit (qcrB) from Mycobacterium bovis (strain ATCC BAA-935 / AF2122/97).